The primary structure comprises 104 residues: Large ribosomal subunit protein uL24 (104 aa).

The protein belongs to the universal ribosomal protein uL24 family. As to quaternary structure, part of the 50S ribosomal subunit.

Functionally, one of two assembly initiator proteins, it binds directly to the 5'-end of the 23S rRNA, where it nucleates assembly of the 50S subunit. Its function is as follows. One of the proteins that surrounds the polypeptide exit tunnel on the outside of the subunit. In Bradyrhizobium diazoefficiens (strain JCM 10833 / BCRC 13528 / IAM 13628 / NBRC 14792 / USDA 110), this protein is Large ribosomal subunit protein uL24.